The primary structure comprises 539 residues: Probable glycerol kinase (539 aa).

Residue Thr-12 participates in substrate binding. Arg-16 is an ATP binding site. 3 residues coordinate substrate: Arg-86, Tyr-168, and Asp-285. ATP contacts are provided by residues Thr-307, Gly-352, and 453 to 457 (GMAKN).

Belongs to the FGGY kinase family.

The enzyme catalyses glycerol + ATP = sn-glycerol 3-phosphate + ADP + H(+). The protein operates within polyol metabolism; glycerol degradation via glycerol kinase pathway; sn-glycerol 3-phosphate from glycerol: step 1/1. The protein is Probable glycerol kinase (gk) of Dictyostelium discoideum (Social amoeba).